We begin with the raw amino-acid sequence, 401 residues long: Phosphoglycerate kinase (401 aa).

Substrate-binding positions include 29–31 (DFN), Arg-45, 69–72 (HLGR), Arg-125, and Arg-158. ATP is bound by residues Lys-209, Glu-331, and 357–360 (GGDT).

It belongs to the phosphoglycerate kinase family. As to quaternary structure, monomer.

It is found in the cytoplasm. The catalysed reaction is (2R)-3-phosphoglycerate + ATP = (2R)-3-phospho-glyceroyl phosphate + ADP. It functions in the pathway carbohydrate degradation; glycolysis; pyruvate from D-glyceraldehyde 3-phosphate: step 2/5. The protein is Phosphoglycerate kinase of Wolinella succinogenes (strain ATCC 29543 / DSM 1740 / CCUG 13145 / JCM 31913 / LMG 7466 / NCTC 11488 / FDC 602W) (Vibrio succinogenes).